The chain runs to 321 residues: Pectinesterase (321 aa).

N-acetylthreonine is present on T1. N75 carries N-linked (GlcNAc...) (complex) asparagine glycosylation. Positions 84 and 114 each coordinate substrate. The active-site Proton donor is D137. The cysteines at positions 151 and 171 are disulfide-linked. D158 functions as the Nucleophile in the catalytic mechanism. R226 and W228 together coordinate substrate. N-linked (GlcNAc...) (complex) asparagine glycosylation is found at N275, N290, and N319.

This sequence belongs to the pectinesterase family. In terms of processing, the N-glycans attached at Asn-75, Asn-275, Asn-290 and Asn-319 are complex oligosaccharides containing xylose, fucose, hexose and N-acetylglucosamine.

It catalyses the reaction [(1-&gt;4)-alpha-D-galacturonosyl methyl ester](n) + n H2O = [(1-&gt;4)-alpha-D-galacturonosyl](n) + n methanol + n H(+). The protein operates within glycan metabolism; pectin degradation; 2-dehydro-3-deoxy-D-gluconate from pectin: step 1/5. Inhibited by PMEI. The protein is Pectinesterase of Actinidia deliciosa (Kiwi).